Here is a 362-residue protein sequence, read N- to C-terminus: Peptide chain release factor 1 (362 aa).

Residue Gln237 is modified to N5-methylglutamine. A compositionally biased stretch (basic and acidic residues) spans 285–295 (EEKRHAEEAST). The tract at residues 285–311 (EEKRHAEEASTRRNLLGSGDRSDRIRT) is disordered.

Belongs to the prokaryotic/mitochondrial release factor family. Post-translationally, methylated by PrmC. Methylation increases the termination efficiency of RF1.

The protein localises to the cytoplasm. Functionally, peptide chain release factor 1 directs the termination of translation in response to the peptide chain termination codons UAG and UAA. The protein is Peptide chain release factor 1 of Photobacterium profundum (strain SS9).